We begin with the raw amino-acid sequence, 28 residues long: M-poneritoxin-Da4b (28 aa).

Position 28 is an alanine amide (Ala-28).

As to expression, expressed by the venom gland.

The protein localises to the secreted. The synthetic peptide has antimicrobial activity against the Gram-positive bacteria B.amyloliquefacies S499 (MIC=0.05 mM), L.monocytogenes 2231 and S.aureus ATCC 29213, against the Gram-negative bacteria P.putida BTP1, P.aeruginosa PaO1 and E.coli ATCC 10536, and against the fungi S.cerevisiae, R.mucilaginosa and C.cucumerinum. It is not active against the fungi F.oxysporum and B.cinerea. The sequence is that of M-poneritoxin-Da4b from Dinoponera australis (Giant neotropical hunting ant).